A 318-amino-acid polypeptide reads, in one-letter code: Methionyl-tRNA formyltransferase (318 aa).

110 to 113 (SLLP) lines the (6S)-5,6,7,8-tetrahydrofolate pocket.

The protein belongs to the Fmt family.

The enzyme catalyses L-methionyl-tRNA(fMet) + (6R)-10-formyltetrahydrofolate = N-formyl-L-methionyl-tRNA(fMet) + (6S)-5,6,7,8-tetrahydrofolate + H(+). Its function is as follows. Attaches a formyl group to the free amino group of methionyl-tRNA(fMet). The formyl group appears to play a dual role in the initiator identity of N-formylmethionyl-tRNA by promoting its recognition by IF2 and preventing the misappropriation of this tRNA by the elongation apparatus. This Lacticaseibacillus paracasei (strain ATCC 334 / BCRC 17002 / CCUG 31169 / CIP 107868 / KCTC 3260 / NRRL B-441) (Lactobacillus paracasei) protein is Methionyl-tRNA formyltransferase.